Reading from the N-terminus, the 336-residue chain is O-methyltransferase 2 (336 aa).

Residues Gly-170, Asp-198, Asn-221, Phe-222, and Lys-237 each contribute to the S-adenosyl-L-methionine site. His-241 functions as the Proton acceptor in the catalytic mechanism.

This sequence belongs to the class I-like SAM-binding methyltransferase superfamily. Cation-independent O-methyltransferase family. COMT subfamily.

It carries out the reaction (3,5-dichloro-2,4,6-trihydroxyphenyl)hexan-1-one + S-adenosyl-L-methionine = 1-(3,5-dichloro-2,6-dihydroxy-4-methoxyphenyl)hexan-1-one + S-adenosyl-L-homocysteine + H(+). In Dictyostelium discoideum (Social amoeba), this protein is O-methyltransferase 2 (omt2).